The following is a 306-amino-acid chain: UDP-N-acetylenolpyruvoylglucosamine reductase (306 aa).

The FAD-binding PCMH-type domain occupies 28–193 (KVGGPADFLA…VSAKFSLKPG (166 aa)). Arginine 172 is an active-site residue. Serine 222 serves as the catalytic Proton donor. Glutamate 292 is an active-site residue.

It belongs to the MurB family. FAD serves as cofactor.

It localises to the cytoplasm. The catalysed reaction is UDP-N-acetyl-alpha-D-muramate + NADP(+) = UDP-N-acetyl-3-O-(1-carboxyvinyl)-alpha-D-glucosamine + NADPH + H(+). It participates in cell wall biogenesis; peptidoglycan biosynthesis. Its function is as follows. Cell wall formation. This chain is UDP-N-acetylenolpyruvoylglucosamine reductase, found in Streptococcus mutans serotype c (strain ATCC 700610 / UA159).